The primary structure comprises 370 residues: Ig heavy chain C region (370 aa).

3 consecutive Ig-like domains span residues 40–134 (PTVI…RNIT), 145–237 (PAIK…DSIH), and 247–347 (PSVS…RTVN). N-linked (GlcNAc...) asparagine glycosylation is found at Asn-98, Asn-132, Asn-177, Asn-343, Asn-347, and Asn-357.

In Heterodontus francisci (Horn shark), this protein is Ig heavy chain C region.